Here is a 470-residue protein sequence, read N- to C-terminus: Glutamate--tRNA ligase (470 aa).

Positions 9 to 19 (PSPTGFLHVGG) match the 'HIGH' region motif. Residues 236 to 240 (RLSKR) carry the 'KMSKS' region motif. An ATP-binding site is contributed by Lys-239.

This sequence belongs to the class-I aminoacyl-tRNA synthetase family. Glutamate--tRNA ligase type 1 subfamily. As to quaternary structure, monomer.

It localises to the cytoplasm. It carries out the reaction tRNA(Glu) + L-glutamate + ATP = L-glutamyl-tRNA(Glu) + AMP + diphosphate. Catalyzes the attachment of glutamate to tRNA(Glu) in a two-step reaction: glutamate is first activated by ATP to form Glu-AMP and then transferred to the acceptor end of tRNA(Glu). The protein is Glutamate--tRNA ligase of Legionella pneumophila (strain Paris).